Here is an 833-residue protein sequence, read N- to C-terminus: Leucine--tRNA ligase (833 aa).

Residues 41–52 carry the 'HIGH' region motif; that stretch reads PYPSGAGLHVGH. The short motif at 610 to 614 is the 'KMSKS' region element; that stretch reads KMSKS. K613 lines the ATP pocket.

Belongs to the class-I aminoacyl-tRNA synthetase family.

Its subcellular location is the cytoplasm. The enzyme catalyses tRNA(Leu) + L-leucine + ATP = L-leucyl-tRNA(Leu) + AMP + diphosphate. In Streptococcus pyogenes serotype M12 (strain MGAS2096), this protein is Leucine--tRNA ligase.